We begin with the raw amino-acid sequence, 221 residues long: uncharacterized protein (221 aa).

Residues 1 to 23 (MNKLIQLALFFTLMLTGCSNSST) form the signal peptide. Residues 67 to 221 (ELGKRKAKEE…QGYIDPEDAP (155 aa)) form a disordered region. Basic and acidic residues predominate over residues 68–150 (LGKRKAKEEA…EQKANAEKKR (83 aa)). Residues 70–161 (KRKAKEEAEK…SQAQRQQTEA (92 aa)) adopt a coiled-coil conformation. The span at 152–161 (SQAQRQQTEA) shows a compositional bias: polar residues. Low complexity predominate over residues 162–174 (PSSNSQDPPSSSS). Residues 175–184 (QTDKTIQQPA) are compositionally biased toward polar residues. Residues 195-205 (YEERKKWHDDQ) are compositionally biased toward basic and acidic residues.

This is an uncharacterized protein from Bacillus subtilis (strain 168).